Here is a 113-residue protein sequence, read N- to C-terminus: MTYIVTDACVRCKFMDCVEVCPVDCFYEGENFLVINPDECIDCGVCEPECPVDAIKPDTEDEADGKWLKINADYAKVWPNITVKGEPPADREDFERETGKFEKYFSEKPGKGS.

4Fe-4S ferredoxin-type domains are found at residues 2–30 (TYIV…YEGE) and 31–60 (NFLV…PDTE). 2 residues coordinate [3Fe-4S] cluster: Cys-9 and Cys-17. Residues Cys-21, Cys-40, Cys-43, and Cys-46 each coordinate [4Fe-4S] cluster. Residue Cys-50 coordinates [3Fe-4S] cluster.

[4Fe-4S] cluster serves as cofactor. The cofactor is [3Fe-4S] cluster.

In Caulobacter vibrioides (strain ATCC 19089 / CIP 103742 / CB 15) (Caulobacter crescentus), this protein is Ferredoxin-1 (fdxA).